We begin with the raw amino-acid sequence, 449 residues long: UDP-N-acetylmuramoylalanine--D-glutamate ligase (449 aa).

119–125 (GTNGKTT) provides a ligand contact to ATP.

The protein belongs to the MurCDEF family.

The protein resides in the cytoplasm. The enzyme catalyses UDP-N-acetyl-alpha-D-muramoyl-L-alanine + D-glutamate + ATP = UDP-N-acetyl-alpha-D-muramoyl-L-alanyl-D-glutamate + ADP + phosphate + H(+). It participates in cell wall biogenesis; peptidoglycan biosynthesis. Its function is as follows. Cell wall formation. Catalyzes the addition of glutamate to the nucleotide precursor UDP-N-acetylmuramoyl-L-alanine (UMA). The protein is UDP-N-acetylmuramoylalanine--D-glutamate ligase of Lactococcus lactis subsp. cremoris (strain SK11).